The primary structure comprises 439 residues: Trehalose-phosphatase (439 aa).

Mg(2+)-binding residues include aspartate 163 and aspartate 165. Aspartate 165 acts as the Proton donor/acceptor in catalysis. 282–284 (QRK) contributes to the substrate binding site. Mg(2+) is bound at residue aspartate 373.

The protein belongs to the gob-1 trehalose phosphatase family. Mg(2+) is required as a cofactor. Ubiquitously expressed. Strong expression in intestine.

It carries out the reaction alpha,alpha-trehalose 6-phosphate + H2O = alpha,alpha-trehalose + phosphate. Functionally, catalyzes the hydrolysis of trehalose 6-phosphate to trehalose and phosphate; prevents the accumulation of toxic levels of trehalose 6-phosphate. In Caenorhabditis elegans, this protein is Trehalose-phosphatase.